The following is a 385-amino-acid chain: 1-deoxy-D-xylulose 5-phosphate reductoisomerase (385 aa).

7 residues coordinate NADPH: Thr-10, Gly-11, Ser-12, Ile-13, Gly-36, Asn-38, and Asn-121. A 1-deoxy-D-xylulose 5-phosphate-binding site is contributed by Lys-122. Glu-123 serves as a coordination point for NADPH. Asp-147 contacts Mn(2+). 1-deoxy-D-xylulose 5-phosphate is bound by residues Ser-148, Glu-149, Ser-173, and His-196. Glu-149 is a Mn(2+) binding site. Gly-202 contacts NADPH. Residues Ser-209, Asn-214, Lys-215, and Glu-218 each coordinate 1-deoxy-D-xylulose 5-phosphate. Glu-218 contacts Mn(2+).

The protein belongs to the DXR family. Requires Mg(2+) as cofactor. The cofactor is Mn(2+).

It catalyses the reaction 2-C-methyl-D-erythritol 4-phosphate + NADP(+) = 1-deoxy-D-xylulose 5-phosphate + NADPH + H(+). Its pathway is isoprenoid biosynthesis; isopentenyl diphosphate biosynthesis via DXP pathway; isopentenyl diphosphate from 1-deoxy-D-xylulose 5-phosphate: step 1/6. In terms of biological role, catalyzes the NADPH-dependent rearrangement and reduction of 1-deoxy-D-xylulose-5-phosphate (DXP) to 2-C-methyl-D-erythritol 4-phosphate (MEP). In Exiguobacterium sp. (strain ATCC BAA-1283 / AT1b), this protein is 1-deoxy-D-xylulose 5-phosphate reductoisomerase.